The following is a 385-amino-acid chain: Probable threonine protease PRSS50 (385 aa).

The first 39 residues, 1–39 (MGRWCQTVARGQRPRTSAPSRAGALLLLLLLLRSAGCWG), serve as a signal peptide directing secretion. The Peptidase S1 domain maps to 93-358 (VSEGKVDPYR…YQHWIWDCLN (266 aa)). Residue Asn133 is glycosylated (N-linked (GlcNAc...) asparagine). Cys138 and Cys154 are disulfide-bonded. Catalysis depends on charge relay system residues His153 and Asp206. Disulfide bonds link Cys240/Cys316, Cys273/Cys296, and Cys306/Cys334. The N-linked (GlcNAc...) asparagine glycan is linked to Asn279. Catalysis depends on Thr310, which acts as the Charge relay system.

The protein belongs to the peptidase S1 family. Testis specific. Differentially expressed in some breast cancer tissues.

Its subcellular location is the endoplasmic reticulum. Functionally, may be involved in proteolysis through its threonine endopeptidase activity. The sequence is that of Probable threonine protease PRSS50 (PRSS50) from Homo sapiens (Human).